We begin with the raw amino-acid sequence, 807 residues long: Leucine--tRNA ligase (807 aa).

The short motif at 40-51 (PYPSGQGLHVGH) is the 'HIGH' region element. A 'KMSKS' region motif is present at residues 575–579 (KMSKS). K578 lines the ATP pocket.

The protein belongs to the class-I aminoacyl-tRNA synthetase family.

The protein localises to the cytoplasm. The enzyme catalyses tRNA(Leu) + L-leucine + ATP = L-leucyl-tRNA(Leu) + AMP + diphosphate. This Latilactobacillus sakei subsp. sakei (strain 23K) (Lactobacillus sakei subsp. sakei) protein is Leucine--tRNA ligase.